The primary structure comprises 497 residues: ATP-dependent RNA helicase HAS1 (497 aa).

Positions M1–V23 are disordered. Residues G34 to T62 carry the Q motif motif. A Helicase ATP-binding domain is found at I65–F241. A78 to T85 is a binding site for ATP. The DEAD box signature appears at D188–D191. The 171-residue stretch at G255–I425 folds into the Helicase C-terminal domain. A Bipartite nuclear localization signal motif is present at residues K267–K283.

Belongs to the DEAD box helicase family. DDX18/HAS1 subfamily. As to quaternary structure, associates in the nucleolus with the 60S and pre-60S ribosomal subunits.

The protein resides in the nucleus. Its subcellular location is the nucleolus. It carries out the reaction ATP + H2O = ADP + phosphate + H(+). ATP-dependent RNA helicase involved in 40S ribosomal subunit biogenesis. Required for the processing and cleavage of 35S pre-rRNA at sites A0, A1, and A2, leading to mature 18S rRNA. This chain is ATP-dependent RNA helicase HAS1 (HAS1), found in Kluyveromyces lactis (strain ATCC 8585 / CBS 2359 / DSM 70799 / NBRC 1267 / NRRL Y-1140 / WM37) (Yeast).